Reading from the N-terminus, the 367-residue chain is Porin Omp2a (367 aa).

Residues 1-22 (MNIKSLLLGSAAALVAASGAQA) form the signal peptide.

The protein belongs to the alphaproteobacteria porin family. Monomer.

It localises to the cell outer membrane. In terms of biological role, forms passive diffusion pores that allow small molecular weight hydrophilic materials across the outer membrane. The sequence is that of Porin Omp2a (omp2a) from Brucella suis.